The sequence spans 341 residues: uncharacterized protein (341 aa).

It belongs to the cycloisomerase 2 family.

This is an uncharacterized protein from Lactococcus lactis subsp. lactis (strain IL1403) (Streptococcus lactis).